Consider the following 349-residue polypeptide: GDSL esterase/lipase At1g58525 (349 aa).

The signal sequence occupies residues 1-19 (MKLQILLLALVLIAVEANA). An N-linked (GlcNAc...) asparagine glycan is attached at N25. S37 functions as the Nucleophile in the catalytic mechanism. N316 carries an N-linked (GlcNAc...) asparagine glycan. Active-site residues include D324 and H327.

The protein belongs to the 'GDSL' lipolytic enzyme family.

Its subcellular location is the secreted. The sequence is that of GDSL esterase/lipase At1g58525 from Arabidopsis thaliana (Mouse-ear cress).